The sequence spans 345 residues: NADH-quinone oxidoreductase subunit H (345 aa).

The next 8 membrane-spanning stretches (helical) occupy residues 13-33, 84-104, 115-135, 161-181, 190-210, 248-268, 277-297, and 309-329; these read VLIL…LLFL, FMLA…VIPF, VAIL…IMGG, LGLI…GGIV, FFSW…ISCL, YIAI…GWLS, VFWM…VKAI, and LGWK…AFAA.

It belongs to the complex I subunit 1 family. As to quaternary structure, NDH-1 is composed of 14 different subunits. Subunits NuoA, H, J, K, L, M, N constitute the membrane sector of the complex.

The protein localises to the cell inner membrane. It carries out the reaction a quinone + NADH + 5 H(+)(in) = a quinol + NAD(+) + 4 H(+)(out). NDH-1 shuttles electrons from NADH, via FMN and iron-sulfur (Fe-S) centers, to quinones in the respiratory chain. The immediate electron acceptor for the enzyme in this species is believed to be ubiquinone. Couples the redox reaction to proton translocation (for every two electrons transferred, four hydrogen ions are translocated across the cytoplasmic membrane), and thus conserves the redox energy in a proton gradient. This subunit may bind ubiquinone. This is NADH-quinone oxidoreductase subunit H from Roseobacter denitrificans (strain ATCC 33942 / OCh 114) (Erythrobacter sp. (strain OCh 114)).